A 155-amino-acid chain; its full sequence is Ribonuclease H (155 aa).

An RNase H type-1 domain is found at 7–150 (AQNAVDLYTD…ADKLACKGRD (144 aa)). Mg(2+)-binding residues include aspartate 16, glutamate 54, aspartate 77, and aspartate 142.

It belongs to the RNase H family. As to quaternary structure, monomer. Mg(2+) serves as cofactor.

The protein resides in the cytoplasm. It carries out the reaction Endonucleolytic cleavage to 5'-phosphomonoester.. Endonuclease that specifically degrades the RNA of RNA-DNA hybrids. The polypeptide is Ribonuclease H (Saccharopolyspora erythraea (strain ATCC 11635 / DSM 40517 / JCM 4748 / NBRC 13426 / NCIMB 8594 / NRRL 2338)).